A 288-amino-acid polypeptide reads, in one-letter code: Polyamine aminopropyltransferase (288 aa).

A PABS domain is found at 9 to 238 (ETLHDQFGQY…GIMTFAWATD (230 aa)). Q33 is a binding site for S-methyl-5'-thioadenosine. Positions 64 and 88 each coordinate spermidine. S-methyl-5'-thioadenosine contacts are provided by residues E108 and 140 to 141 (DG). The active-site Proton acceptor is D158. 158-161 (DCTD) is a binding site for spermidine. P165 contacts S-methyl-5'-thioadenosine.

It belongs to the spermidine/spermine synthase family. As to quaternary structure, homodimer or homotetramer.

It is found in the cytoplasm. The catalysed reaction is S-adenosyl 3-(methylsulfanyl)propylamine + putrescine = S-methyl-5'-thioadenosine + spermidine + H(+). Its pathway is amine and polyamine biosynthesis; spermidine biosynthesis; spermidine from putrescine: step 1/1. In terms of biological role, catalyzes the irreversible transfer of a propylamine group from the amino donor S-adenosylmethioninamine (decarboxy-AdoMet) to putrescine (1,4-diaminobutane) to yield spermidine. The polypeptide is Polyamine aminopropyltransferase (Shigella boydii serotype 18 (strain CDC 3083-94 / BS512)).